We begin with the raw amino-acid sequence, 258 residues long: Leucyl/phenylalanyl-tRNA--protein transferase (258 aa).

The disordered stretch occupies residues 199–220 (GGSDGPAPDQSIGMSSSGGVSD). The span at 209 to 220 (SIGMSSSGGVSD) shows a compositional bias: low complexity.

The protein belongs to the L/F-transferase family.

Its subcellular location is the cytoplasm. The catalysed reaction is N-terminal L-lysyl-[protein] + L-leucyl-tRNA(Leu) = N-terminal L-leucyl-L-lysyl-[protein] + tRNA(Leu) + H(+). It carries out the reaction N-terminal L-arginyl-[protein] + L-leucyl-tRNA(Leu) = N-terminal L-leucyl-L-arginyl-[protein] + tRNA(Leu) + H(+). The enzyme catalyses L-phenylalanyl-tRNA(Phe) + an N-terminal L-alpha-aminoacyl-[protein] = an N-terminal L-phenylalanyl-L-alpha-aminoacyl-[protein] + tRNA(Phe). In terms of biological role, functions in the N-end rule pathway of protein degradation where it conjugates Leu, Phe and, less efficiently, Met from aminoacyl-tRNAs to the N-termini of proteins containing an N-terminal arginine or lysine. In Hyphomonas neptunium (strain ATCC 15444), this protein is Leucyl/phenylalanyl-tRNA--protein transferase.